A 123-amino-acid chain; its full sequence is Large ribosomal subunit protein bL12 (123 aa).

This sequence belongs to the bacterial ribosomal protein bL12 family. Homodimer. Part of the ribosomal stalk of the 50S ribosomal subunit. Forms a multimeric L10(L12)X complex, where L10 forms an elongated spine to which 2 to 4 L12 dimers bind in a sequential fashion. Binds GTP-bound translation factors.

In terms of biological role, forms part of the ribosomal stalk which helps the ribosome interact with GTP-bound translation factors. Is thus essential for accurate translation. The protein is Large ribosomal subunit protein bL12 of Rhodopseudomonas palustris (strain BisB5).